Consider the following 276-residue polypeptide: Large ribosomal subunit protein uL2 (276 aa).

The interval 219–276 (TVRGSVMNPNDHPHGGGEGRSPIGRPSPVTPWGKPALGYKTRKKNKASNKLIVSRRTK) is disordered. A compositionally biased stretch (basic residues) spans 258 to 276 (KTRKKNKASNKLIVSRRTK).

Belongs to the universal ribosomal protein uL2 family. As to quaternary structure, part of the 50S ribosomal subunit. Forms a bridge to the 30S subunit in the 70S ribosome.

Functionally, one of the primary rRNA binding proteins. Required for association of the 30S and 50S subunits to form the 70S ribosome, for tRNA binding and peptide bond formation. It has been suggested to have peptidyltransferase activity; this is somewhat controversial. Makes several contacts with the 16S rRNA in the 70S ribosome. This is Large ribosomal subunit protein uL2 from Clostridioides difficile (strain 630) (Peptoclostridium difficile).